Here is a 189-residue protein sequence, read N- to C-terminus: Ras-like protein 1 (189 aa).

Position 10–17 (10–17) interacts with GTP; it reads GAGGVGKS. Positions 32-40 match the Effector region motif; that stretch reads YDPTIEDSY. GTP is bound by residues 57-61 and 116-119; these read DTAGQ and NKCD. C186 carries the cysteine methyl ester modification. A lipid anchor (S-geranylgeranyl cysteine) is attached at C186. Positions 187–189 are cleaved as a propeptide — removed in mature form; that stretch reads KIL.

Belongs to the small GTPase superfamily. Ras family.

The protein localises to the cell membrane. It carries out the reaction GTP + H2O = GDP + phosphate + H(+). Its activity is regulated as follows. Alternates between an inactive form bound to GDP and an active form bound to GTP. Activated by a guanine nucleotide-exchange factor (GEF) and inactivated by a GTPase-activating protein (GAP). Its function is as follows. Ras proteins bind GDP/GTP and possess intrinsic GTPase activity. Plays a role in eye development by regulating cell growth, survival of postmitotic ommatidial cells and differentiation of photoreceptor cells. During larval development, mediates Ptth/tor signaling leading to the production of ecdysone, a hormone required for the initiation of metamorphosis. The chain is Ras-like protein 1 from Drosophila persimilis (Fruit fly).